Consider the following 339-residue polypeptide: Photosystem II assembly lipoprotein Ycf48 (339 aa).

Positions 1-22 (MVIVKSWQKIFTLLVVLLLCIG) are cleaved as a signal peptide. Cys23 carries N-palmitoyl cysteine lipidation. The S-diacylglycerol cysteine moiety is linked to residue Cys23.

Belongs to the Ycf48 family. In terms of assembly, part of early PSII assembly complexes which includes D1 (psbA) and PsbI; not found in mature PSII. Binds to the lumenal side of PSII complexes. Interacts with YidC.

Its subcellular location is the cellular thylakoid membrane. A factor required for optimal assembly of photosystem II (PSII), acting in the early stages of PSII assembly. Also plays a role in replacement of photodamaged D1 (psbA). Assists YidC in synthesis of chlorophyll-binding proteins. The protein is Photosystem II assembly lipoprotein Ycf48 of Nostoc sp. (strain PCC 7120 / SAG 25.82 / UTEX 2576).